Consider the following 448-residue polypeptide: Phosphoglucosamine mutase (448 aa).

The active-site Phosphoserine intermediate is the Ser-104. Positions 104, 243, 245, and 247 each coordinate Mg(2+). Ser-104 is modified (phosphoserine).

The protein belongs to the phosphohexose mutase family. Mg(2+) serves as cofactor. Activated by phosphorylation.

It catalyses the reaction alpha-D-glucosamine 1-phosphate = D-glucosamine 6-phosphate. In terms of biological role, catalyzes the conversion of glucosamine-6-phosphate to glucosamine-1-phosphate. This Xylella fastidiosa (strain 9a5c) protein is Phosphoglucosamine mutase.